The chain runs to 327 residues: Movement protein (327 aa).

Positions 297 to 327 (IASSSSTENELARVSQNIDLLKNKLKEICGE) form a coiled coil.

This sequence belongs to the caulimoviridae movement protein family. As to quaternary structure, homotrimer, through the coiled-coil domain. Interacts with VAP. May interact (via N-terminus) with host prenylated Rab acceptor protein 1D (PRA1D).

It localises to the host cell junction. Its subcellular location is the host plasmodesma. Functionally, transports viral genome to neighboring plant cells directly through plasmosdesmata, without any budding. The movement protein allows efficient cell to cell propagation, by bypassing the host cell wall barrier. Acts by forming tubules structures that increase the size exclusion limit (SEL) of plasmodesmata, thereby allowing viral ribonucleocapsids to spread directly to neighboring cells. This Cauliflower mosaic virus (strain D/H) (CaMV) protein is Movement protein.